We begin with the raw amino-acid sequence, 846 residues long: MSGKIQLLVAFLLTSACLIYCTKYVTVFYGVPVWKNASIPLFCATKNRDTWGTIQCLPDNDDYQEIPLNVTEAFDAWDNIVTEQAVEDVWNLFETSIKPCVKLTPLCVTMNCNASTESAVATTSPSGPDMINDTDPCIQLNNCSGLREEDMVECQFNMTGLELDKKKQYSETWYSKDVVCESDNSTDRKRCYMNHCNTSVITESCDKHYWDAMRFRYCAPPGFVLLRCNDTNYSGFEPNCSKVVASTCTRMMETQPSTWLGFNGTRAENRTYIYWHGRDNRTIISLNKYYNLTILCRRPENKTVVPITLMSGRRFHSQKIINKKPRQAWCRFKGEWREAMQEVKQTLVKHPRYKGTNDTNKINFTAPEKDSDPEVAYMWTNCRGEFLYCNMTWFLNWVENKTGQQHNYVPCHIEQIINTWHKVGKNVYLPPREGELSCESTVTSIIANIDVDGDNRTNITFSAEVAELYRLELGDYKLVEVTPIGFAPTAEKRYSSAPGRHKRGVLVLGFLGFLTTAGAAMGAASLTLSAQSRTLFRGIVQQQQQLLDVVKRQQEMLRLTVWGTKNLQARVTAIEKYLADQARLNSWGCAFRQVCHTTVPWVNDTLTPEWNNMTWQEWEHKIRFLEANISESLEQAQIQQEKNMYELQKLNSWDVFGNWFDLTSWIKYIQYGVMIVVGIVALRIVIYVVQMLSRLRKGYRPVFSSPPGYIQQIHIHKDWEQPDREETEEDVGNDVGSRSWPWPIEYIHFLIRLLIRLLTRLYNSCRDLLSRLYLILQPLRDWLRLKAAYLQYGCEWIQEAFQALARVTRETLTSAGRSLWGALGRIGRGILAVPRRIRQGAEIALL.

An N-terminal signal peptide occupies residues 1–21 (MSGKIQLLVAFLLTSACLIYC). Residues 22-671 (TKYVTVFYGV…LTSWIKYIQY (650 aa)) are Extracellular-facing. Asparagine 36 carries N-linked (GlcNAc...) asparagine; by host glycosylation. An intrachain disulfide couples cysteine 43 to cysteine 56. 21 N-linked (GlcNAc...) asparagine; by host glycosylation sites follow: asparagine 69, asparagine 113, asparagine 132, asparagine 142, asparagine 157, asparagine 184, asparagine 197, asparagine 229, asparagine 232, asparagine 239, asparagine 263, asparagine 269, asparagine 280, asparagine 291, asparagine 301, asparagine 357, asparagine 363, asparagine 390, asparagine 400, asparagine 455, and asparagine 458. 5 cysteine pairs are disulfide-bonded: cysteine 100/cysteine 205, cysteine 107/cysteine 196, cysteine 112/cysteine 154, cysteine 218/cysteine 248, and cysteine 228/cysteine 240. The segment at 112–153 (CNASTESAVATTSPSGPDMINDTDPCIQLNNCSGLREEDMVE) is V1. The segment at 154-196 (CQFNMTGLELDKKKQYSETWYSKDVVCESDNSTDRKRCYMNHC) is V2. Residues 296–329 (CRRPENKTVVPITLMSGRRFHSQKIINKKPRQAW) are V3. A disulfide bond links cysteine 296 and cysteine 330. 2 disulfide bridges follow: cysteine 382–cysteine 438 and cysteine 389–cysteine 411. The interval 389-411 (CNMTWFLNWVENKTGQQHNYVPC) is V4. The tract at residues 454–461 (DNRTNITF) is V5. Positions 504 to 524 (GVLVLGFLGFLTTAGAAMGAA) are fusion peptide. Residues 567–583 (LQARVTAIEKYLADQAR) form an immunosuppression region. N-linked (GlcNAc...) asparagine; by host glycosylation is found at asparagine 603, asparagine 612, and asparagine 628. Residues 616–643 (QEWEHKIRFLEANISESLEQAQIQQEKN) are a coiled coil. The segment at 649 to 670 (KLNSWDVFGNWFDLTSWIKYIQ) is MPER; binding to GalCer. A helical membrane pass occupies residues 672–692 (GVMIVVGIVALRIVIYVVQML). Over 693 to 846 (SRLRKGYRPV…IRQGAEIALL (154 aa)) the chain is Cytoplasmic. Positions 699-702 (YRPV) match the YXXV motif; contains endocytosis signal motif. The S-palmitoyl cysteine; by host moiety is linked to residue cysteine 765. Positions 845-846 (LL) match the Di-leucine internalization motif motif.

As to quaternary structure, the mature envelope protein (Env) consists of a homotrimer of non-covalently associated gp120-gp41 heterodimers. The resulting complex protrudes from the virus surface as a spike. There seems to be as few as 10 spikes on the average virion. Interacts with human CD4, CCR5 and CXCR4, to form a P4HB/PDI-CD4-CXCR4-gp120 complex. Gp120 also interacts with the C-type lectins CD209/DC-SIGN and CLEC4M/DC-SIGNR (collectively referred to as DC-SIGN(R)). Gp120 and gp41 interact with GalCer. The mature envelope protein (Env) consists of a homotrimer of non-covalently associated gp120-gp41 heterodimers. The resulting complex protrudes from the virus surface as a spike. There seems to be as few as 10 spikes on the average virion. In terms of processing, specific enzymatic cleavages in vivo yield mature proteins. Envelope glycoproteins are synthesized as an inactive precursor that is heavily N-glycosylated and processed likely by host cell furin in the Golgi to yield the mature SU and TM proteins. The cleavage site between SU and TM requires the minimal sequence [KR]-X-[KR]-R. Post-translationally, palmitoylation of the transmembrane protein and of Env polyprotein (prior to its proteolytic cleavage) is essential for their association with host cell membrane lipid rafts. Palmitoylation is therefore required for envelope trafficking to classical lipid rafts, but not for viral replication.

The protein resides in the virion membrane. It localises to the host cell membrane. It is found in the host endosome membrane. Functionally, the surface protein gp120 (SU) attaches the virus to the host lymphoid cell by binding to the primary receptor CD4. This interaction induces a structural rearrangement creating a high affinity binding site for a chemokine coreceptor like CXCR4 and/or CCR5. This peculiar 2 stage receptor-interaction strategy allows gp120 to maintain the highly conserved coreceptor-binding site in a cryptic conformation, protected from neutralizing antibodies. Since CD4 also displays a binding site for the disulfide-isomerase P4HB/PDI, a P4HB/PDI-CD4-CXCR4-gp120 complex may form. In that complex, P4HB/PDI could reach and reduce gp120 disulfide bonds, causing major conformational changes in gp120. TXN, another PDI family member could also be involved in disulfide rearrangements in Env during fusion. These changes are transmitted to the transmembrane protein gp41 and are thought to activate its fusogenic potential by unmasking its fusion peptide. Its function is as follows. The surface protein gp120 is a ligand for CD209/DC-SIGN and CLEC4M/DC-SIGNR, which are respectively found on dendritic cells (DCs), and on endothelial cells of liver sinusoids and lymph node sinuses. These interactions allow capture of viral particles at mucosal surfaces by these cells and subsequent transmission to permissive cells. DCs are professional antigen presenting cells, critical for host immunity by inducing specific immune responses against a broad variety of pathogens. They act as sentinels in various tissues where they take up antigen, process it, and present it to T-cells following migration to lymphoid organs. HIV subverts the migration properties of dendritic cells to gain access to CD4+ T-cells in lymph nodes. Virus transmission to permissive T-cells occurs either in trans (without DCs infection, through viral capture and transmission), or in cis (following DCs productive infection, through the usual CD4-gp120 interaction), thereby inducing a robust infection. In trans infection, bound virions remain infectious over days and it is proposed that they are not degraded, but protected in non-lysosomal acidic organelles within the DCs close to the cell membrane thus contributing to the viral infectious potential during DCs' migration from the periphery to the lymphoid tissues. On arrival at lymphoid tissues, intact virions recycle back to DCs' cell surface allowing virus transmission to CD4+ T-cells. Virion capture also seems to lead to MHC-II-restricted viral antigen presentation, and probably to the activation of HIV-specific CD4+ cells. In terms of biological role, the transmembrane protein gp41 (TM) acts as a class I viral fusion protein. Under the current model, the protein has at least 3 conformational states: pre-fusion native state, pre-hairpin intermediate state, and post-fusion hairpin state. During fusion of viral and target intracellular membranes, the coiled coil regions (heptad repeats) assume a trimer-of-hairpins structure, positioning the fusion peptide in close proximity to the C-terminal region of the ectodomain. The formation of this structure appears to drive apposition and subsequent fusion of viral and target cell membranes. Complete fusion occurs in host cell endosomes and is dynamin-dependent, however some lipid transfer might occur at the plasma membrane. The virus undergoes clathrin-dependent internalization long before endosomal fusion, thus minimizing the surface exposure of conserved viral epitopes during fusion and reducing the efficacy of inhibitors targeting these epitopes. Membranes fusion leads to delivery of the nucleocapsid into the cytoplasm. The envelope glycoprotein gp160 precursor down-modulates cell surface CD4 antigen by interacting with it in the endoplasmic reticulum and blocking its transport to the cell surface. Functionally, the gp120-gp41 heterodimer seems to contribute to T-cell depletion during HIV-1 infection. The envelope glycoproteins expressed on the surface of infected cells induce apoptosis through an interaction with uninfected cells expressing the receptor (CD4) and the coreceptors CXCR4 or CCR5. This type of bystander killing may be obtained by at least three distinct mechanisms. First, the interaction between the 2 cells can induce cellular fusion followed by nuclear fusion within the syncytium. Syncytia are condemned to die from apoptosis. Second, the 2 interacting cells may not fuse entirely and simply exchange plasma membrane lipids, after a sort of hemifusion process, followed by rapid death. Third, it is possible that virus-infected cells, on the point of undergoing apoptosis, fuse with CD4-expressing cells, in which case apoptosis is rapidly transmitted from one cell to the other and thus occurs in a sort of contagious fashion. Its function is as follows. The gp120-gp41 heterodimer allows rapid transcytosis of the virus through CD4 negative cells such as simple epithelial monolayers of the intestinal, rectal and endocervical epithelial barriers. Both gp120 and gp41 specifically recognize glycosphingolipids galactosyl-ceramide (GalCer) or 3' sulfo-galactosyl-ceramide (GalS) present in the lipid rafts structures of epithelial cells. Binding to these alternative receptors allows the rapid transcytosis of the virus through the epithelial cells. This transcytotic vesicle-mediated transport of virions from the apical side to the basolateral side of the epithelial cells does not involve infection of the cells themselves. This is Envelope glycoprotein gp160 (env) from Human immunodeficiency virus type 2 subtype A (isolate SBLISY) (HIV-2).